The sequence spans 363 residues: Ly6/PLAUR domain-containing protein 3 (363 aa).

The first 32 residues, 1–32 (MDAARRGDTQPVMWTTGWLLLLPLLLCEGAQA), serve as a signal peptide directing secretion. The UPAR/Ly6 1 domain occupies 35–128 (CYSCVQKADD…LNLTLRGLNP (94 aa)). N120, N131, N178, and N185 each carry an N-linked (GlcNAc...) asparagine glycan. Residues 142-224 (CYSCVGLSRE…GSCCQGPRCN (83 aa)) enclose the UPAR/Ly6 2 domain. Residues 238 to 248 (PPLVLLPPPTT) are compositionally biased toward pro residues. Disordered regions lie at residues 238-287 (PPLV…TSPH) and 301-336 (LSGG…GGAQ). The segment covering 249-278 (AAPSTRAQNSSSTTSTAAPTTTTSIIKPTT) has biased composition (low complexity). Residues 304–318 (GAAGHGGTAGHGGAA) are compositionally biased toward gly residues. Residues 320–330 (HQDRSNMEKYP) are compositionally biased toward basic and acidic residues. S343 carries GPI-anchor amidated serine lipidation. The propeptide at 344-363 (GTLGSWLSAVLLTVVAGAML) is removed in mature form.

In terms of assembly, binds laminin-1 and laminin-5. Interacts with LGALS3. Interacts with AGR2 and AGR3.

The protein resides in the cell membrane. Functionally, supports cell migration. May be involved in tumor progression. The polypeptide is Ly6/PLAUR domain-containing protein 3 (Lypd3) (Mus musculus (Mouse)).